Consider the following 606-residue polypeptide: Phosphoenolpyruvate carboxykinase [GTP] (606 aa).

Residues Arg79 and 218–220 (YGG) contribute to the substrate site. Mn(2+) is bound by residues Lys227 and His247. A substrate-binding site is contributed by Ser269. 270–275 (ACGKTN) is a binding site for GTP. Residue Cys271 is part of the active site. Residue Asp294 participates in Mn(2+) binding. Substrate is bound at residue 384-386 (NSR). Residues Arg386, Arg417, and 512-515 (FGEN) contribute to the GTP site.

Belongs to the phosphoenolpyruvate carboxykinase [GTP] family. As to quaternary structure, monomer. Mn(2+) serves as cofactor.

It localises to the cytoplasm. It carries out the reaction oxaloacetate + GTP = phosphoenolpyruvate + GDP + CO2. It participates in carbohydrate biosynthesis; gluconeogenesis. Its function is as follows. Catalyzes the conversion of oxaloacetate (OAA) to phosphoenolpyruvate (PEP), the rate-limiting step in the metabolic pathway that produces glucose from lactate and other precursors derived from the citric acid cycle. This Corynebacterium jeikeium (strain K411) protein is Phosphoenolpyruvate carboxykinase [GTP].